We begin with the raw amino-acid sequence, 265 residues long: U6 snRNA phosphodiesterase 1 (265 aa).

A disordered region spans residues 1-72 (MSAAPLVGYS…DSTKHGGRVR (72 aa)). Over residues 20 to 31 (DGMRTRPGDGSH) the composition is skewed to basic and acidic residues. The active-site Proton acceptor is the H120. 120–122 (HLS) serves as a coordination point for AMP. Residues Q164, Y202, and 206–210 (SFHLS) each bind UMP. Residues Y202 and 204–210 (DPSFHLS) contribute to the AMP site. H208 functions as the Proton donor in the catalytic mechanism.

The protein belongs to the 2H phosphoesterase superfamily. USB1 family. Interacts with PLRG1, CDC5L and PRPF19.

The protein resides in the nucleus. The enzyme catalyses a 3'-end uridylyl-uridine-RNA = a 3'-end 2',3'-cyclophospho-uridine-RNA + uridine. It carries out the reaction a 3'-end uridylyl-adenosine-RNA = a 3'-end 2',3'-cyclophospho-uridine-RNA + adenosine. Its activity is regulated as follows. 3'-5' RNA exonuclease activity is inhibited by a 3' phosphate terminated RNA. Functionally, 3'-5' RNA exonuclease that trims the 3' end of oligo(U) and oligo(A) tracts of the pre-U6 small nuclear RNA (snRNA) molecule, leading to the formation of a mature U6 snRNA 3' end-terminated with a 2',3'-cyclic phosphate. Participates in the U6 snRNA 3' end processing that prevents U6 snRNA degradation. In addition also removes uridines from the 3' end of U6atac snRNA and possibly the vault RNA VTRNA1-1. The chain is U6 snRNA phosphodiesterase 1 from Homo sapiens (Human).